The primary structure comprises 366 residues: UDP-N-acetylenolpyruvoylglucosamine reductase (366 aa).

In terms of domain architecture, FAD-binding PCMH-type spans 29–203 (VGPVARTLVT…LEVEFALDAS (175 aa)). Residue Arg177 is part of the active site. The active-site Proton donor is Ser258. Glu358 is a catalytic residue.

It belongs to the MurB family. The cofactor is FAD.

It localises to the cytoplasm. The catalysed reaction is UDP-N-acetyl-alpha-D-muramate + NADP(+) = UDP-N-acetyl-3-O-(1-carboxyvinyl)-alpha-D-glucosamine + NADPH + H(+). Its pathway is cell wall biogenesis; peptidoglycan biosynthesis. Functionally, cell wall formation. This is UDP-N-acetylenolpyruvoylglucosamine reductase from Mycobacterium marinum (strain ATCC BAA-535 / M).